The following is a 765-amino-acid chain: Putative maltooligosyl trehalose synthase (765 aa).

Belongs to the glycosyl hydrolase 13 family. In terms of assembly, monomer.

The enzyme catalyses 4-[(1-&gt;4)-alpha-D-glucosyl](n-1)-D-glucose = 1-[(1-&gt;4)-alpha-D-glucosyl](n-1)-alpha-D-glucose. In terms of biological role, catalyzes the conversion of maltooligosaccharide into the non-reducing saccharide, maltooligosyl trehalose (alpha-maltooligosyl alpha-D-glucoside) by intramolecular transglycosylation. The sequence is that of Putative maltooligosyl trehalose synthase (treY) from Mycobacterium tuberculosis (strain CDC 1551 / Oshkosh).